The following is a 552-amino-acid chain: Polypeptide N-acetylgalactosaminyltransferase 14 (552 aa).

The Cytoplasmic segment spans residues 1–6 (MRRLTR). The chain crosses the membrane as a helical; Signal-anchor for type II membrane protein span at residues 7–26 (RLVLPVFGVLWITVLLFFWV). At 27 to 552 (TKRKLEVPTG…MSQHWDMVSS (526 aa)) the chain is on the lumenal side. 5 cysteine pairs are disulfide-bonded: C101-C328, C319-C397, C430-C449, C476-C493, and C517-C538. The catalytic subdomain A stretch occupies residues 110-215 (LPPTSIIITF…RDWLQPLLHR (106 aa)). 2 residues coordinate substrate: D151 and R176. D199 contributes to the Mn(2+) binding site. Position 200 (S200) interacts with substrate. H201 contributes to the Mn(2+) binding site. Residues 274–336 (PIRTPIIAGG…PCSRVGHVFR (63 aa)) are catalytic subdomain B. Position 305 (W305) interacts with substrate. H333 contributes to the Mn(2+) binding site. R336, H339, and Y341 together coordinate substrate. Residues 415 to 550 (KESSIQKGNI…SLMSQHWDMV (136 aa)) form the Ricin B-type lectin domain.

It belongs to the glycosyltransferase 2 family. GalNAc-T subfamily. It depends on Mn(2+) as a cofactor. In terms of tissue distribution, detected in renal tubules (at protein level). Highly expressed in fetal and adult kidney. Widely expressed at low level. Weakly expressed in whole brain, cerebellum, thymus, lung, mammary gland, liver, stomach, small intestine, colon, pancreas, spleen, bladder, uterus, placenta, testis, ovary, skeletal muscle, leukocyte, B-cell, bone marrow, fetal brain, fetal thymus, fetal lung, fetal liver, fetal small intestine, fetal spleen, fetal skeletal and fetus. Detected in renal tubules (at protein level).

The protein localises to the golgi apparatus membrane. The enzyme catalyses L-seryl-[protein] + UDP-N-acetyl-alpha-D-galactosamine = a 3-O-[N-acetyl-alpha-D-galactosaminyl]-L-seryl-[protein] + UDP + H(+). It carries out the reaction L-threonyl-[protein] + UDP-N-acetyl-alpha-D-galactosamine = a 3-O-[N-acetyl-alpha-D-galactosaminyl]-L-threonyl-[protein] + UDP + H(+). Its pathway is protein modification; protein glycosylation. Catalyzes the initial reaction in O-linked oligosaccharide biosynthesis, the transfer of an N-acetyl-D-galactosamine residue to a serine or threonine residue on the protein receptor. Displays activity toward mucin-derived peptide substrates such as Muc2, Muc5AC, Muc7, and Muc13 (-58). May be involved in O-glycosylation in kidney. This Homo sapiens (Human) protein is Polypeptide N-acetylgalactosaminyltransferase 14 (GALNT14).